Consider the following 414-residue polypeptide: uncharacterized protein (414 aa).

Residues 1–20 (MKKLLAIGILCIMVTAVMSG) form the signal peptide. The S-archaeol cysteine moiety is linked to residue Cys21. The Fe/B12 periplasmic-binding domain maps to 119–389 (RVIVMSSTEI…DLATILHPEA (271 aa)).

It localises to the cell membrane. This is an uncharacterized protein from Methanocaldococcus jannaschii (strain ATCC 43067 / DSM 2661 / JAL-1 / JCM 10045 / NBRC 100440) (Methanococcus jannaschii).